The primary structure comprises 357 residues: Probable leucine aminopeptidase ARB_00576 (357 aa).

An N-terminal signal peptide occupies residues 1–15 (MKVLAALALSALAMA). N-linked (GlcNAc...) asparagine glycosylation occurs at N76. Zn(2+)-binding residues include H167 and D185. The segment at 169–188 (DSINGNNPQGEAPGADDNGS) is disordered. N-linked (GlcNAc...) asparagine glycosylation occurs at N186. Positions 224 and 251 each coordinate Zn(2+). N-linked (GlcNAc...) asparagine glycosylation occurs at N269. Cysteines 291 and 295 form a disulfide. H324 is a binding site for Zn(2+).

This sequence belongs to the peptidase M28 family. M28E subfamily. In terms of assembly, monomer. Zn(2+) is required as a cofactor.

Its subcellular location is the secreted. Functionally, probable extracellular aminopeptidase which contributes to pathogenicity. The polypeptide is Probable leucine aminopeptidase ARB_00576 (Arthroderma benhamiae (strain ATCC MYA-4681 / CBS 112371) (Trichophyton mentagrophytes)).